Reading from the N-terminus, the 479-residue chain is Aspartyl/glutamyl-tRNA(Asn/Gln) amidotransferase subunit B (479 aa).

The protein belongs to the GatB/GatE family. GatB subfamily. As to quaternary structure, heterotrimer of A, B and C subunits.

It carries out the reaction L-glutamyl-tRNA(Gln) + L-glutamine + ATP + H2O = L-glutaminyl-tRNA(Gln) + L-glutamate + ADP + phosphate + H(+). The enzyme catalyses L-aspartyl-tRNA(Asn) + L-glutamine + ATP + H2O = L-asparaginyl-tRNA(Asn) + L-glutamate + ADP + phosphate + 2 H(+). Its function is as follows. Allows the formation of correctly charged Asn-tRNA(Asn) or Gln-tRNA(Gln) through the transamidation of misacylated Asp-tRNA(Asn) or Glu-tRNA(Gln) in organisms which lack either or both of asparaginyl-tRNA or glutaminyl-tRNA synthetases. The reaction takes place in the presence of glutamine and ATP through an activated phospho-Asp-tRNA(Asn) or phospho-Glu-tRNA(Gln). The chain is Aspartyl/glutamyl-tRNA(Asn/Gln) amidotransferase subunit B from Alcanivorax borkumensis (strain ATCC 700651 / DSM 11573 / NCIMB 13689 / SK2).